A 413-amino-acid chain; its full sequence is Unsaturated 3S-rhamnoglycuronyl hydrolase (413 aa).

An N-terminal signal peptide occupies residues 1–21; sequence MNHTKLKLSAVALTLALGLSA. Cys22 is lipidated: N-palmitoyl cysteine. Cys22 is lipidated: S-diacylglycerol cysteine. Asp203 acts as the Proton donor in catalysis.

This sequence belongs to the glycosyl hydrolase 105 family.

Its subcellular location is the cell membrane. In terms of biological role, glucuronyl hydrolase involved in ulvan degradation. Ulvan is the main polysaccharide component of the Ulvales (green seaweed) cell wall. It is composed of disaccharide building blocks comprising 3-sulfated rhamnose (Rha3S) linked to D-glucuronic acid (GlcA), L-iduronic acid (IduA), or D-xylose (Xyl). Unsaturated 3S-rhamnoglycuronyl hydrolase works together with ulvan lyases to fully degrade the ulvan polymer, catalyzing specifically the cleavage of the unsaturated 4-deoxy-L-threo-hex-4-enopyranosiduronic acid (deltaUA) of the deltaUA-oligosaccharides deltaUA-Rha3S, deltaUA-Rha3S-IduA-Rha3S and deltaUA-Rha3S-Xyl-Rha3S, the end products of the ulvan lyase reaction. The chain is Unsaturated 3S-rhamnoglycuronyl hydrolase from Alteromonas sp. (strain LOR).